The primary structure comprises 305 residues: Beta-carotene 3-hydroxylase, chloroplastic (305 aa).

The N-terminal 41 residues, 1–41, are a transit peptide targeting the chloroplast; the sequence is MAFAMSSSLTLFQYQSFGKKPFFSRRRDFAGCSMMNPLVAR. 2 helical membrane-spanning segments follow: residues 98 to 118 and 129 to 149; these read YLVA…AAVY and AVPL…AVGM. The Fatty acid hydroxylase domain maps to 146–272; the sequence is AVGMEYWARW…KFNGVPYGLF (127 aa). The Histidine box-1 motif lies at 157–162; sequence HRALWH. Positions 169 to 173 match the Histidine box-2 motif; that stretch reads HESHH. Helical transmembrane passes span 184-204 and 207-227; these read DVFA…GFFH and FFSG…MAYM. The Histidine box-3 motif lies at 230–235; sequence HDGLVH. The Histidine box-4 signature appears at 256–260; sequence HQIHH.

Belongs to the sterol desaturase family. As to quaternary structure, homodimer. As to expression, expressed in flower buds and lips. Detected in roots and leaves.

It is found in the plastid. The protein resides in the chloroplast membrane. The catalysed reaction is all-trans-beta-carotene + 4 reduced [2Fe-2S]-[ferredoxin] + 2 O2 + 4 H(+) = all-trans-zeaxanthin + 4 oxidized [2Fe-2S]-[ferredoxin] + 2 H2O. Functionally, nonheme diiron monooxygenase involved in the biosynthesis of xanthophylls. Specific for beta-ring hydroxylations of beta-carotene. Uses ferredoxin as an electron donor. In Oncidium hybrid cultivar (Orchid), this protein is Beta-carotene 3-hydroxylase, chloroplastic (BHY).